The chain runs to 217 residues: uncharacterized protein (217 aa).

6 helical membrane passes run 13–35 (IWLT…IALL), 50–68 (FSLV…ILYL), 75–94 (FLLA…EWRI), 109–131 (MMAL…LFSL), 152–174 (YLAI…AAAV), and 194–216 (GFSL…FAGL).

Its subcellular location is the cell membrane. This is an uncharacterized protein from Archaeoglobus fulgidus (strain ATCC 49558 / DSM 4304 / JCM 9628 / NBRC 100126 / VC-16).